A 753-amino-acid polypeptide reads, in one-letter code: Bifunctional terpene synthase FUP1 (753 aa).

Residues 1–329 (MGPLLYRSRH…CSACPRQNAW (329 aa)) are terpene cyclase. Mg(2+) is bound at residue D96. The short motif at 96–100 (DDTGE) is the DDXXD 1 element. The NSE/DTE signature appears at 231–239 (NDYFSWERE). The tract at residues 330-745 (KNDTLSNGQN…MLRLCLAKLS (416 aa)) is prenyltransferase. K461, R464, and H493 together coordinate isopentenyl diphosphate. Mg(2+) contacts are provided by D500 and D504. The short motif at 500–504 (DDLED) is the DDXXD 2 element. R509 contacts dimethylallyl diphosphate. R510 lines the isopentenyl diphosphate pocket. Dimethylallyl diphosphate-binding residues include K587, T588, Q625, N632, K640, and K650.

The protein in the N-terminal section; belongs to the terpene synthase family. This sequence in the C-terminal section; belongs to the FPP/GGPP synthase family. As to quaternary structure, hexamer. Mg(2+) serves as cofactor.

The catalysed reaction is isopentenyl diphosphate + (2E,6E)-farnesyl diphosphate = (2E,6E,10E)-geranylgeranyl diphosphate + diphosphate. Its pathway is secondary metabolite biosynthesis; terpenoid biosynthesis. Bifunctional terpene synthase; part of the gene cluster that mediates the biosynthesis of the mycotoxin fusaproliferin (FUP) that belongs to the class of bicyclic sesterterpenoids. The FUP biosynthetic pathway starts with the enzyme encoded by FUP1 that combines a C-terminal prenyltransferase domain responsible for the synthesis of geranylgeranyl diphosphate with the N-terminal terpene cyclase domain, to yield preterpestacin I. Preterpestacin I is then decorated by oxygenation steps that are catalyzed by two cytochrome P450 monooxygenases. First, FUP2 introduces a hydroxyl group at the C-24 position resulting in the formation of preterpestacin IIa, which can be further oxidized. The second P450 monooxygenase catalyzes the hydroxylation at C-16 and C-17 of preterpestacin IIa, producing preterpestacin III. Subsequently, the FAD-dependent oxidoreductase FUP4 catalyzes the oxidation of the hydroxy group at the C-16 position to a keto group, leading to the formation of (-)-terpestacin, which is the immediate precursor of FUP. The final step in the proposed biosynthetic pathway is the addition of an acetyl group at the C-24 position of terpestacin, which is catalyzed by the acetyltransferase FUP5. The sequence is that of Bifunctional terpene synthase FUP1 from Fusarium proliferatum (strain ET1) (Orchid endophyte fungus).